The primary structure comprises 102 residues: A-type ATP synthase subunit F (102 aa).

It belongs to the V-ATPase F subunit family. In terms of assembly, has multiple subunits with at least A(3), B(3), C, D, E, F, H, I and proteolipid K(x).

Its subcellular location is the cell membrane. Its function is as follows. Component of the A-type ATP synthase that produces ATP from ADP in the presence of a proton gradient across the membrane. In Thermococcus kodakarensis (strain ATCC BAA-918 / JCM 12380 / KOD1) (Pyrococcus kodakaraensis (strain KOD1)), this protein is A-type ATP synthase subunit F.